A 348-amino-acid chain; its full sequence is Erlin-1 (348 aa).

The Cytoplasmic segment spans residues 1-7; that stretch reads MNMTQAR. A helical transmembrane segment spans residues 8-28; sequence LLVAAVVGLVAILLYASIHKI. The Lumenal segment spans residues 29–348; sequence EEGHLAVYYR…SPIQNKENAG (320 aa). An N-linked (GlcNAc...) asparagine glycan is attached at asparagine 108. Lysine 269 carries the post-translational modification N6-acetyllysine. Over residues 318–336 the composition is skewed to basic and acidic residues; sequence DGRTGREDSLPPEEAREPS. A disordered region spans residues 318-348; it reads DGRTGREDSLPPEEAREPSGESPIQNKENAG. Residues 339–348 are compositionally biased toward polar residues; it reads SPIQNKENAG.

It belongs to the band 7/mec-2 family. Forms a heteromeric complex with ERLIN2. In complex with ERLIN2, interacts with RNF170. Interacts with AMFR and SYVN1. In terms of processing, deubiquitinated by USP25; leading to stabilization.

It is found in the endoplasmic reticulum membrane. Its function is as follows. Component of the ERLIN1/ERLIN2 complex which mediates the endoplasmic reticulum-associated degradation (ERAD) of inositol 1,4,5-trisphosphate receptors (IP3Rs). Involved in regulation of cellular cholesterol homeostasis by regulation the SREBP signaling pathway. Binds cholesterol and may promote ER retention of the SCAP-SREBF complex. The sequence is that of Erlin-1 from Mus musculus (Mouse).